We begin with the raw amino-acid sequence, 382 residues long: Mannan endo-1,4-beta-mannosidase (382 aa).

A signal peptide spans methionine 1–serine 19. Substrate-binding positions include tryptophan 83, asparagine 144, tryptophan 147–lysine 151, and asparagine 180. Catalysis depends on glutamate 181, which acts as the Proton donor/acceptor. Residues glutamine 187, glutamine 204, tryptophan 208, tryptophan 243, tyrosine 282, and histidine 284 each coordinate substrate. A disulfide bridge links cysteine 195 with cysteine 262. Catalysis depends on glutamate 312, which acts as the Nucleophile. The cysteines at positions 317 and 349 are disulfide-linked. The substrate site is built by tryptophan 341 and aspartate 348. The segment at glycine 346–serine 350 is involved in stabilization of the transition state.

This sequence belongs to the glycosyl hydrolase 5 (cellulase A) family. As to quaternary structure, monomer.

Its subcellular location is the secreted. The catalysed reaction is Random hydrolysis of (1-&gt;4)-beta-D-mannosidic linkages in mannans, galactomannans and glucomannans.. Activated particularly by Ca(2+) and Zn(2+), and to a lesser extent by Na(+), K(+), Mg(2+) and Cu(2+). Activation effect of the divalent metal ions Ca(2+), Zn(2+), Mg(2+) and Cu(2+) is reduced significantly by the addition of EDTA. Strongly inhibited by Mn(2+), Hg(2+) and Ag(+). In terms of biological role, hydrolyzes 1,4-beta linked polysaccharide backbones of mannans. Has high activity toward locust bean gum. Also active toward konjac and beta-1,4-mannan. Hydrolyzes mannotetraose (M4) and mannopentaose (M5) to mannobiose (M2) and mannotriose (M3) with a little production of mannose (M1). Hydrolyzes beta-1,4-mannan to M2, M3 and M4. Hardly hydrolyzes M2 and M3. Does not hydrolyze p-nitrophenyl-beta-D-mannopyranoside, gua-gum, carboxymethyl cellulose, soluble starch or laminarin. The chain is Mannan endo-1,4-beta-mannosidase from Cryptopygus antarcticus (Antarctic springtail).